Consider the following 167-residue polypeptide: MELKHLPKYKHITEHAETYANIDAGSLELFLSLFDISKKMNHVMEHYFAGRGLSEGKFKILMLLFDAKDHRLSPTELAKRSNVTKATITGLLDGLARDGFVSRRHHTEDKRKISIELTTEGKARLEQFLPGHFSKISAVMENYSDEEKDMFVKMLGDLFERLSVFKD.

The HTH marR-type domain occupies 26-160; the sequence is SLELFLSLFD…FVKMLGDLFE (135 aa). Positions 74-97 form a DNA-binding region, H-T-H motif; sequence PTELAKRSNVTKATITGLLDGLAR.

As to quaternary structure, homodimer. The N- and C-terminal helices from both subunits stabilize YetL dimer via extensive intersubunit interactions.

Binding to the yetM cis sequence is clearly inhibited by kaempferol, morin, apigenin and luteolin, slightly inhibited by quercetin and galangin, but no inhibition is observed with the other flavonoids. Flavonoid binding may induce conformational changes and modulate interaction with DNA. Functionally, negatively regulates yetM expression and its own expression. Binds specifically to corresponding single sites in the divergent yetL and yetM promoter regions, with higher affinity to the yetM region. Recognizes a 28-mer operator of double-stranded DNA that contains a palindromic sequence. The sequence is that of HTH-type transcriptional repressor YetL (yetL) from Bacillus subtilis (strain 168).